The chain runs to 313 residues: Adhesin MafA 1 (313 aa).

The first 14 residues, 1-14, serve as a signal peptide directing secretion; sequence MKILLLLIPLVLTA. C15 is lipidated: N-palmitoyl cysteine. The S-diacylglycerol cysteine moiety is linked to residue C15. The segment covering 282–298 has biased composition (polar residues); it reads GDTTAQNRPDFKQNNGK. A disordered region spans residues 282-313; the sequence is GDTTAQNRPDFKQNNGKNPDVGNEVIRRRKGG.

It belongs to the MafA family.

It localises to the cell outer membrane. The sequence is that of Adhesin MafA 1 (mafA1) from Neisseria meningitidis serogroup C / serotype 2a (strain ATCC 700532 / DSM 15464 / FAM18).